We begin with the raw amino-acid sequence, 371 residues long: Histidinol-phosphate aminotransferase (371 aa).

At Lys-232 the chain carries N6-(pyridoxal phosphate)lysine.

Belongs to the class-II pyridoxal-phosphate-dependent aminotransferase family. Histidinol-phosphate aminotransferase subfamily. In terms of assembly, homodimer. Pyridoxal 5'-phosphate serves as cofactor.

It carries out the reaction L-histidinol phosphate + 2-oxoglutarate = 3-(imidazol-4-yl)-2-oxopropyl phosphate + L-glutamate. Its pathway is amino-acid biosynthesis; L-histidine biosynthesis; L-histidine from 5-phospho-alpha-D-ribose 1-diphosphate: step 7/9. The sequence is that of Histidinol-phosphate aminotransferase from Methylibium petroleiphilum (strain ATCC BAA-1232 / LMG 22953 / PM1).